We begin with the raw amino-acid sequence, 641 residues long: Choline O-acetyltransferase (641 aa).

The tract at residues 1-29 (MPILEKTPPKMAAKSPSSEEEPGLPKLPV) is disordered. Position 17 is a phosphoserine (Ser17). The active-site Proton acceptor is His335. A Phosphoserine modification is found at Ser366. Residues 413–425 (GKTF…CSPD), Ser451, and Gln552 contribute to the CoA site. The interval 619-641 (QSGMGKPLATKEKVTRPSQVHQP) is disordered.

Belongs to the carnitine/choline acetyltransferase family.

The enzyme catalyses choline + acetyl-CoA = acetylcholine + CoA. In terms of biological role, catalyzes the reversible synthesis of acetylcholine (ACh) from acetyl CoA and choline at cholinergic synapses. The chain is Choline O-acetyltransferase (CHAT) from Sus scrofa (Pig).